Reading from the N-terminus, the 368-residue chain is Caffeine synthase 3 (368 aa).

An S-adenosyl-L-homocysteine-binding site is contributed by Tyr-23. Position 30 (Thr-30) interacts with caffeine. Cys-65, Asn-70, Asp-102, Leu-103, Ser-137, and Phe-138 together coordinate S-adenosyl-L-homocysteine. Caffeine-binding residues include Tyr-155, His-158, and Trp-159. Asn-176 provides a ligand contact to Mg(2+). Arg-224 provides a ligand contact to caffeine. The Mg(2+) site is built by Asp-262, Phe-264, and Asn-265. Phe-320 provides a ligand contact to caffeine.

It belongs to the methyltransferase superfamily. Type-7 methyltransferase family. Requires Mg(2+) as cofactor.

It carries out the reaction theobromine + S-adenosyl-L-methionine = caffeine + S-adenosyl-L-homocysteine + H(+). The catalysed reaction is 7-methylxanthine + S-adenosyl-L-methionine = theobromine + S-adenosyl-L-homocysteine + H(+). Its pathway is alkaloid biosynthesis. Functionally, involved in the biosynthesis of caffeine. Catalyzes the conversion of 7-methylxanthine (7mX) to theobromine and of theobromine to caffeine. The sequence is that of Caffeine synthase 3 from Camellia sinensis (Tea plant).